Consider the following 59-residue polypeptide: uncharacterized protein (59 aa).

This is an uncharacterized protein from Chenopodium amaranticolor (Quinoa).